The primary structure comprises 236 residues: Small ribosomal subunit protein eS6 (236 aa).

The protein belongs to the eukaryotic ribosomal protein eS6 family. Component of the small ribosomal subunit. Mature ribosomes consist of a small (40S) and a large (60S) subunit. The 40S subunit contains about 32 different proteins and 1 molecule of RNA (18S). The 60S subunit contains 45 different proteins and 3 molecules of RNA (25S, 5.8S and 5S).

It localises to the cytoplasm. In terms of biological role, component of the ribosome, a large ribonucleoprotein complex responsible for the synthesis of proteins in the cell. The small ribosomal subunit (SSU) binds messenger RNAs (mRNAs) and translates the encoded message by selecting cognate aminoacyl-transfer RNA (tRNA) molecules. The large subunit (LSU) contains the ribosomal catalytic site termed the peptidyl transferase center (PTC), which catalyzes the formation of peptide bonds, thereby polymerizing the amino acids delivered by tRNAs into a polypeptide chain. The nascent polypeptides leave the ribosome through a tunnel in the LSU and interact with protein factors that function in enzymatic processing, targeting, and the membrane insertion of nascent chains at the exit of the ribosomal tunnel. RPS6A is involved in nucleolar processing of pre-18S ribosomal RNA and ribosome assembly. The sequence is that of Small ribosomal subunit protein eS6 (RPS6A) from Candida albicans (strain SC5314 / ATCC MYA-2876) (Yeast).